The following is a 233-amino-acid chain: Putative N-acetylmannosamine-6-phosphate 2-epimerase (233 aa).

Belongs to the NanE family.

The catalysed reaction is an N-acyl-D-glucosamine 6-phosphate = an N-acyl-D-mannosamine 6-phosphate. It functions in the pathway amino-sugar metabolism; N-acetylneuraminate degradation; D-fructose 6-phosphate from N-acetylneuraminate: step 3/5. Converts N-acetylmannosamine-6-phosphate (ManNAc-6-P) to N-acetylglucosamine-6-phosphate (GlcNAc-6-P). The chain is Putative N-acetylmannosamine-6-phosphate 2-epimerase from Yersinia pseudotuberculosis serotype O:3 (strain YPIII).